The following is a 177-amino-acid chain: MSVATNPNHAGADREVGTQALNRELQDKGFLVTSSEDIINWARTGSLHWMTFGLACCAVEMMHTSMPRYDAERFGIAPRASPRQSDVMIVAGTLTNKMAPALRKVYDQMPEPRYVISMGSCANGGGYYHYSYSVVRGCDRIVPVDIYVPGCPPTAEALLYGILQLQRKIRRTGTIAR.

Residues cysteine 56, cysteine 57, cysteine 121, and cysteine 151 each contribute to the [4Fe-4S] cluster site.

The protein belongs to the complex I 20 kDa subunit family. As to quaternary structure, NDH-1 is composed of 14 different subunits. Subunits NuoB, C, D, E, F, and G constitute the peripheral sector of the complex. It depends on [4Fe-4S] cluster as a cofactor.

It is found in the cell inner membrane. It catalyses the reaction a quinone + NADH + 5 H(+)(in) = a quinol + NAD(+) + 4 H(+)(out). Functionally, NDH-1 shuttles electrons from NADH, via FMN and iron-sulfur (Fe-S) centers, to quinones in the respiratory chain. Couples the redox reaction to proton translocation (for every two electrons transferred, four hydrogen ions are translocated across the cytoplasmic membrane), and thus conserves the redox energy in a proton gradient. This Jannaschia sp. (strain CCS1) protein is NADH-quinone oxidoreductase subunit B.